The chain runs to 602 residues: Elongation factor 4 (602 aa).

The tr-type G domain maps to 7–188 (ENIRNFSIIA…SIIRLVPPPK (182 aa)). Residues 19–24 (DHGKST) and 135–138 (NKID) contribute to the GTP site.

This sequence belongs to the TRAFAC class translation factor GTPase superfamily. Classic translation factor GTPase family. LepA subfamily.

It localises to the cell inner membrane. It catalyses the reaction GTP + H2O = GDP + phosphate + H(+). Its function is as follows. Required for accurate and efficient protein synthesis under certain stress conditions. May act as a fidelity factor of the translation reaction, by catalyzing a one-codon backward translocation of tRNAs on improperly translocated ribosomes. Back-translocation proceeds from a post-translocation (POST) complex to a pre-translocation (PRE) complex, thus giving elongation factor G a second chance to translocate the tRNAs correctly. Binds to ribosomes in a GTP-dependent manner. In Chlamydia muridarum (strain MoPn / Nigg), this protein is Elongation factor 4.